The following is a 193-amino-acid chain: Interferon type A3 (193 aa).

The signal sequence occupies residues 1–31 (MAVPASPQHPRGYGILLLTLLLKALATTASA). 3 cysteine pairs are disulfide-bonded: Cys32–Cys129, Cys61–Cys155, and Cys68–Cys168. 4 N-linked (GlcNAc...) asparagine glycosylation sites follow: Asn65, Asn71, Asn108, and Asn186.

This sequence belongs to the alpha/beta interferon family.

Its subcellular location is the secreted. Functionally, has antiviral activities. This is Interferon type A3 (IFNA3) from Gallus gallus (Chicken).